The primary structure comprises 72 residues: DNA-directed RNA polymerase subunit omega (72 aa).

This sequence belongs to the RNA polymerase subunit omega family. As to quaternary structure, the RNAP catalytic core consists of 2 alpha, 1 beta, 1 beta' and 1 omega subunit. When a sigma factor is associated with the core the holoenzyme is formed, which can initiate transcription.

The enzyme catalyses RNA(n) + a ribonucleoside 5'-triphosphate = RNA(n+1) + diphosphate. Promotes RNA polymerase assembly. Latches the N- and C-terminal regions of the beta' subunit thereby facilitating its interaction with the beta and alpha subunits. The polypeptide is DNA-directed RNA polymerase subunit omega (Clostridium botulinum (strain Loch Maree / Type A3)).